The chain runs to 715 residues: MNSIIGGTDPLSMIFKEEEIKKQQILLEKEEKEKQEQQQKKLNKDNIFKLEEEGKKLELSTKVHIQHPNISTTSDNNSLLDPSNLTLNGKKKKWINSFCIINFDLEIGQVLDYSFPQVNFKEEESTNLCFLSFPDSNSHLQGDIIYSFKLKETSSLGNGQCNFQYGYVFFRQEKDSSISRGYLQKSVVLLSDESFVGLFKKVMEIVGPLYFDHGNTLLEVAYQNIMNWPELKLGQTYELPILGYILTFHVPHTRGTPHIIDPVVKQHQLGGGSGGGLSSSPSSSSGGGNIPTSNTTGVSPSIWSEMKLVSNLKSIDIYGCFKSFTTKLWMLWELVLLGHPLLVISPNPPMCSDSVLALVSLISPLHYCGDYRPYFTIHDTDFHKYTSFSHLSGTRPDDSNNNNNQDDSEYNNNNNNNGIPPSILGVTNPFFLKALGNWPNILTIGTTQQRLGGFKKIKSSLPNIMSKDLLTRHVLDNKEKILSEYKPFISPDKSVLKKITESADDDIINEVLRTHFLQLTQKFLIPLERYFSLLLPLAKTISIFQRPPRLKPFIKEECLNKIMETDERFIIDNKSKEIELYKQFLDCVNFKQWLDDKRAQAIKHLNILYRKAILDADIHTLLRGKPISTATDLLKRVEDQLILEENLFQTSKEIKDKFKSHIEIIRQYKNNCDNNNENNNNNILLTSPIKSTSLSSIALPPSSTTVTTKTTTTTK.

Positions 13–58 (MIFKEEEIKKQQILLEKEEKEKQEQQQKKLNKDNIFKLEEEGKKLE) form a coiled coil. The uDENN domain occupies 96-273 (NSFCIINFDL…VKQHQLGGGS (178 aa)). 2 disordered regions span residues 269–296 (LGGG…SNTT) and 392–416 (SGTR…NNNN). Residues 299 to 476 (SPSIWSEMKL…KDLLTRHVLD (178 aa)) enclose the cDENN domain. The segment covering 399–416 (SNNNNNQDDSEYNNNNNN) has biased composition (low complexity). Residues 478-600 (KEKILSEYKP…KQWLDDKRAQ (123 aa)) form the dDENN domain.

Belongs to the DENND6 family.

This Dictyostelium discoideum (Social amoeba) protein is Protein DENND6 homolog.